The sequence spans 103 residues: Large ribosomal subunit protein bL21 (103 aa).

It belongs to the bacterial ribosomal protein bL21 family. In terms of assembly, part of the 50S ribosomal subunit. Contacts protein L20.

Functionally, this protein binds to 23S rRNA in the presence of protein L20. The polypeptide is Large ribosomal subunit protein bL21 (Mycolicibacterium paratuberculosis (strain ATCC BAA-968 / K-10) (Mycobacterium paratuberculosis)).